Reading from the N-terminus, the 283-residue chain is tRNA-cytidine(32) 2-sulfurtransferase (283 aa).

The short motif at 37–42 (SGGKDS) is the PP-loop motif element. The [4Fe-4S] cluster site is built by Cys112, Cys115, and Cys203.

This sequence belongs to the TtcA family. As to quaternary structure, homodimer. The cofactor is Mg(2+). It depends on [4Fe-4S] cluster as a cofactor.

It is found in the cytoplasm. The enzyme catalyses cytidine(32) in tRNA + S-sulfanyl-L-cysteinyl-[cysteine desulfurase] + AH2 + ATP = 2-thiocytidine(32) in tRNA + L-cysteinyl-[cysteine desulfurase] + A + AMP + diphosphate + H(+). Its pathway is tRNA modification. Functionally, catalyzes the ATP-dependent 2-thiolation of cytidine in position 32 of tRNA, to form 2-thiocytidine (s(2)C32). The sulfur atoms are provided by the cysteine/cysteine desulfurase (IscS) system. The chain is tRNA-cytidine(32) 2-sulfurtransferase from Legionella pneumophila (strain Paris).